The sequence spans 473 residues: Poly(A) polymerase catalytic subunit (473 aa).

Active-site residues include Asp193 and Asp195.

The protein belongs to the poxviridae poly(A) polymerase catalytic subunit family. In terms of assembly, heterodimer of a large (catalytic) subunit and a small (regulatory) subunit.

It carries out the reaction RNA(n) + ATP = RNA(n)-3'-adenine ribonucleotide + diphosphate. Its function is as follows. Polymerase that creates the 3'-poly(A) tail of mRNA's. This chain is Poly(A) polymerase catalytic subunit (PAPL), found in Crocodylus johnstoni (Australian freshwater crocodile).